A 552-amino-acid polypeptide reads, in one-letter code: MSDIALTVSMLALVAVLGLWIGNWRIYGVGLGIGGVLFGGIIVGHVAHQYQIQLNDDMLHVIQEFGLILFVYTIGIQVGPGFFSSLRVSGLRLNAFALLTVFLGSVVTVMLHKLLNIPLPIILGIFSGAVTNTPSLGAGQQILTDLGSSTALVNQMGTGYAMAYPLGICGILLVMWLMRVLFRVAVDNEAKQFETSNGQHHEQLLTINVSVTNTNLQGLAIQDVPILNRDTIVCSRLKRGDELMVPSPHTLIQLGDYLHLVGAKNDLEQARLVIGNEVETSLSTRGTDLHVERVVVTNEKVLGRKIRELNLKQNYDVVISRLNRAGVELVASNQASLQFGDILNLVGRKTAIDAVADIVGNAQQKLQQVQMLPVFIGIGLGVLLGSVPLMVPGFPVALRLGLAGGPLVVALVLGRIGSIGKLHWFMPPSANLALRELGIVLFLSVVGLKSGGDFVDTLLNGDGVWWIGYGALITIVPLLAVGILARTLGKMNYLTLCGMLAGSMTDPPALAFANGLHPTSGAAALSYATVYPLAMFLRIMSPQLLAVLFLTL.

The next 5 membrane-spanning stretches (helical) occupy residues Ile-4–Trp-24, Ile-26–Val-46, Phe-65–Ser-85, Gly-90–His-112, and Thr-158–Met-178. 2 RCK C-terminal domains span residues Lys-191–Asn-276 and Glu-279–Asn-361. Transmembrane regions (helical) follow at residues Met-371–Val-391, Gly-393–Leu-413, Ile-439–Leu-459, Val-464–Leu-484, Tyr-493–Ala-513, and Val-530–Leu-550.

The protein belongs to the AAE transporter (TC 2.A.81) family. YidE subfamily.

It localises to the cell membrane. The sequence is that of Putative transport protein ECA4401 from Pectobacterium atrosepticum (strain SCRI 1043 / ATCC BAA-672) (Erwinia carotovora subsp. atroseptica).